Reading from the N-terminus, the 257-residue chain is Phycoerythrobilin:ferredoxin oxidoreductase (257 aa).

It belongs to the HY2 family.

The enzyme catalyses (3Z)-phycoerythrobilin + oxidized 2[4Fe-4S]-[ferredoxin] = 15,16-dihydrobiliverdin + reduced 2[4Fe-4S]-[ferredoxin] + 2 H(+). Functionally, catalyzes the two-electron reduction of the C2 and C3(1) diene system of 15,16-dihydrobiliverdin. The protein is Phycoerythrobilin:ferredoxin oxidoreductase (pebB) of Prochlorococcus marinus subsp. pastoris (strain CCMP1986 / NIES-2087 / MED4).